Here is a 218-residue protein sequence, read N- to C-terminus: Pyridoxine/pyridoxamine 5'-phosphate oxidase (218 aa).

Residues 14–17 (RREY) and K72 contribute to the substrate site. FMN-binding positions include 67-72 (RIVLLK), 82-83 (YT), R88, K89, and Q111. Y129, R133, and S137 together coordinate substrate. FMN contacts are provided by residues 146–147 (QS) and W191. 197–199 (RLH) serves as a coordination point for substrate. R201 serves as a coordination point for FMN.

The protein belongs to the pyridoxamine 5'-phosphate oxidase family. In terms of assembly, homodimer. It depends on FMN as a cofactor.

It catalyses the reaction pyridoxamine 5'-phosphate + O2 + H2O = pyridoxal 5'-phosphate + H2O2 + NH4(+). It carries out the reaction pyridoxine 5'-phosphate + O2 = pyridoxal 5'-phosphate + H2O2. The protein operates within cofactor metabolism; pyridoxal 5'-phosphate salvage; pyridoxal 5'-phosphate from pyridoxamine 5'-phosphate: step 1/1. Its pathway is cofactor metabolism; pyridoxal 5'-phosphate salvage; pyridoxal 5'-phosphate from pyridoxine 5'-phosphate: step 1/1. In terms of biological role, catalyzes the oxidation of either pyridoxine 5'-phosphate (PNP) or pyridoxamine 5'-phosphate (PMP) into pyridoxal 5'-phosphate (PLP). This is Pyridoxine/pyridoxamine 5'-phosphate oxidase from Escherichia coli O157:H7.